A 386-amino-acid polypeptide reads, in one-letter code: 17-hydroxy-3-oxo-4-pregnene-20-carboxyl-CoA lyase (386 aa).

Catalysis depends on Y292, which acts as the Proton acceptor. Y342 (proton donor) is an active-site residue.

Belongs to the thiolase-like superfamily. As to quaternary structure, homodimer. Interacts with the ChsH1/ChsH2 hydratase via the DUF35 C-terminal region of ChsH2 (ChsH2-DUF35). The ChsH1-ChsH2-Ltp2 protein complex is composed of two protomers that form a heterohexameric structure through the Ltp2 dimerization interface.

It catalyses the reaction 17-hydroxy-3-oxochol-4-en-22-oyl-CoA = androst-4-ene-3,17-dione + propanoyl-CoA. It participates in steroid metabolism; cholesterol degradation. Involved in cholesterol side chain degradation. When associated with the ChsH1/ChsH2 hydratase, catalyzes the retroaldol cleavage of 17-hydroxy-3-oxo-4-pregnene-20-carboxyl-CoA (17-HOPC-CoA) produced by the hydratase, forming androst-4-ene-3,17-dione and propionyl-CoA. The chain is 17-hydroxy-3-oxo-4-pregnene-20-carboxyl-CoA lyase from Mycobacterium tuberculosis (strain ATCC 25618 / H37Rv).